Consider the following 212-residue polypeptide: Ribosome maturation factor RimM (212 aa).

The PRC barrel domain occupies 105 to 181 (EEEFYYADLI…IDSITAGLDN (77 aa)). A disordered region spans residues 181–212 (NAELSGEEDEAEGPESARGSRPRGPKSAGEPR).

Belongs to the RimM family. In terms of assembly, binds ribosomal protein uS19.

Its subcellular location is the cytoplasm. Its function is as follows. An accessory protein needed during the final step in the assembly of 30S ribosomal subunit, possibly for assembly of the head region. Essential for efficient processing of 16S rRNA. May be needed both before and after RbfA during the maturation of 16S rRNA. It has affinity for free ribosomal 30S subunits but not for 70S ribosomes. The polypeptide is Ribosome maturation factor RimM (Chelativorans sp. (strain BNC1)).